The chain runs to 500 residues: Squalene epoxidase ERG1 (500 aa).

The helical transmembrane segment at 20–40 threads the bilayer; it reads EADVVVVGAGVFGCTMAFALA. Residues 30–31, 50–51, arginine 58, arginine 145, aspartate 332, and methionine 345 each bind FAD; these read VF and ER. 2 helical membrane-spanning segments follow: residues 450–470 and 474–494; these read AFLA…LGIF and LAII…IPIM.

The protein belongs to the squalene monooxygenase family. FAD is required as a cofactor.

The protein resides in the microsome membrane. It localises to the endoplasmic reticulum membrane. Its subcellular location is the lipid droplet. It catalyses the reaction squalene + reduced [NADPH--hemoprotein reductase] + O2 = (S)-2,3-epoxysqualene + oxidized [NADPH--hemoprotein reductase] + H2O + H(+). The protein operates within terpene metabolism; lanosterol biosynthesis; lanosterol from farnesyl diphosphate: step 2/3. It functions in the pathway steroid metabolism; ergosterol biosynthesis. Functionally, squalene epoxidase; part of the third module of ergosterol biosynthesis pathway that includes the late steps of the pathway. ERG1 catalyzes the epoxidation of squalene into 2,3-epoxysqualene. The third module or late pathway involves the ergosterol synthesis itself through consecutive reactions that mainly occur in the endoplasmic reticulum (ER) membrane. Firstly, the squalene synthase ERG9 catalyzes the condensation of 2 farnesyl pyrophosphate moieties to form squalene, which is the precursor of all steroids. Squalene synthase is crucial for balancing the incorporation of farnesyl diphosphate (FPP) into sterol and nonsterol isoprene synthesis. Secondly, squalene is converted into lanosterol by the consecutive action of the squalene epoxidase ERG1 and the lanosterol synthase ERG7. Then, the delta(24)-sterol C-methyltransferase ERG6 methylates lanosterol at C-24 to produce eburicol. Eburicol is the substrate of the sterol 14-alpha demethylase encoded by CYP51A, CYP51B and CYP51C, to yield 4,4,24-trimethyl ergosta-8,14,24(28)-trienol. CYP51B encodes the enzyme primarily responsible for sterol 14-alpha-demethylation, and plays an essential role in ascospore formation. CYP51A encodes an additional sterol 14-alpha-demethylase, induced on ergosterol depletion and responsible for the intrinsic variation in azole sensitivity. The third CYP51 isoform, CYP51C, does not encode a sterol 14-alpha-demethylase, but is required for full virulence on host wheat ears. The C-14 reductase ERG24 then reduces the C14=C15 double bond which leads to 4,4-dimethylfecosterol. A sequence of further demethylations at C-4, involving the C-4 demethylation complex containing the C-4 methylsterol oxidases ERG25, the sterol-4-alpha-carboxylate 3-dehydrogenase ERG26 and the 3-keto-steroid reductase ERG27, leads to the production of fecosterol via 4-methylfecosterol. ERG28 has a role as a scaffold to help anchor ERG25, ERG26 and ERG27 to the endoplasmic reticulum. The C-8 sterol isomerase ERG2 then catalyzes the reaction which results in unsaturation at C-7 in the B ring of sterols and thus converts fecosterol to episterol. The sterol-C5-desaturases ERG3A and ERG3BB then catalyze the introduction of a C-5 double bond in the B ring to produce 5-dehydroepisterol. The C-22 sterol desaturases ERG5A and ERG5B further convert 5-dehydroepisterol into ergosta-5,7,22,24(28)-tetraen-3beta-ol by forming the C-22(23) double bond in the sterol side chain. Finally, ergosta-5,7,22,24(28)-tetraen-3beta-ol is substrate of the C-24(28) sterol reductase ERG4 to produce ergosterol. The sequence is that of Squalene epoxidase ERG1 from Gibberella zeae (strain ATCC MYA-4620 / CBS 123657 / FGSC 9075 / NRRL 31084 / PH-1) (Wheat head blight fungus).